The sequence spans 355 residues: (R,S)-reticuline 7-O-methyltransferase (355 aa).

S-adenosyl-L-methionine-binding positions include 197-200 (VGGG), D221, 221-222 (DL), 241-242 (DM), and K255. H259 serves as the catalytic Proton acceptor.

This sequence belongs to the class I-like SAM-binding methyltransferase superfamily. Cation-independent O-methyltransferase family. Homodimer. Expressed in capsules, buds and stems, and at lower levels in leaves. Localized to parenchyma cells within the vascular bundle, but only to those cells distal to laticifers. In roots, found in the pericycle within the stele.

It catalyses the reaction (S)-reticuline + S-adenosyl-L-methionine = (S)-laudanine + S-adenosyl-L-homocysteine + H(+). The catalysed reaction is (R)-reticuline + S-adenosyl-L-methionine = (R)-laudanine + S-adenosyl-L-homocysteine + H(+). In terms of biological role, catalyzes the transfer of a methyl group to reticuline to form laudanine. Methylates the simple catechols guaiacol and isovanillic acid as well as the tetrahydrobenzylisoquinolines (R)-reticuline, (S)-reticuline, (R,S)-orientaline, (R)-protosinomenine and (R,S)-isoorientaline. Involved in the production of laudanine. The sequence is that of (R,S)-reticuline 7-O-methyltransferase from Papaver somniferum (Opium poppy).